Here is a 1279-residue protein sequence, read N- to C-terminus: MTLTERLREKISQAFYNHGLLCASYPIPIILFTGLCILACCYPLLKLPLPGTGPVEFTTPVKDYSPPPSASDHKPGEPSEQPEWYVGAPVAYIQQIFVKSSVSPWHKNLLAVDVFRSPLSRAFQLVEEIRNHVLRDSSGTRSLEEVCLQVTDLLPGLRKLRNILPEHGCLLLSPGNFWQNDRERFHADPDIIGTIHQHEPKTLQTSATLKDLLFGVPGKHSGVSLYTRKRLVSYTITLVFQHYHAKFLGSLRARLMLLHPSPNCSLRAESLVHVHFKEEIGIAELIPLVTTYIILFAYIYFSTRKIDMVKSKWGLALAAVVTVLSSLLMSVGLCTLFGLTPTLNGGEIFPYLVVVIGLENVLVLTKSVVSTPVDLEVKLRIAQGLSSESWSIMKNMATELGIILIGYFTLVPAIQEFCLFAVVGLVSDFFLQMPFFTTVLSIDIRRMELADLNKRLPPEACLPPAKPVGRSARFERQLAVRPATPHTITLQPSSFRNLRLPKRLRVIYFLARTRLAQRLIMAGTVVWIGILAYTDPAGLRTYLAAQVTEQSPLGEGALAPMPVPSGVLPASHPDPAFSIFPPEAPKLLENQTLPGEPPEPGGQAEGVHDSPAPEVTWGPEDEELWRKLSFRHWPTLFSYYNITLAKRYISLLPVIPVTLRLNPREALEGRHPQDSRSAWSPPQPAQGGLWDAGPKGPGVAQAHRDVTLYKVAALGLATGILLVLLLCLYRVLCPRNYGQPGAGPGRRRRGELPCDDYGYAPPETEIVPLVLRGHLMDIECLASDGMLLVSCCLAGHVCVWDAQTGDCLTRIPHPGRQRRDSGVGSVLEAQENWERLSDGGKASPEEPGDSPPLRHRPRGTPLPSLFGDQPDLTCLIDTNFSAHPRLPELDHPEPRHRSGCRRTQDCTGYDFSRLVQRAYQEEGMVPMHTPAPRPPSPGPTPPQTPEDEGSFPPEKGSPSFTWAPSADGSIWSLELQGNLIVVGRSSGRLEVWDAIEGMLRCSSEEVASGITALVFLDKRIVAARLNGSLDFFSLETHTALSPLQFRGAPGRGSSPTSPVYSSSDTVVCHLTHTVPCAHQKPITALKAAAGRLVTGSQDHTLRVFRLEDSCCLFTLQGHSGAITTVYIDQTMVLASGGQDGAICLWDVLTGSRVSHMFAHRGDVTSLTCTTSCVISSGLDDLISIWDRSTGIKLYSIQQDLGCGASLGVISDNLLVTGGQGCVSFWDLNYGDLLQTVYLGKDSEAQPARQILVLDNAAIVCNFGSELSLVYVPSVLEKLD.

Topologically, residues 1-18 are cytoplasmic; it reads MTLTERLREKISQAFYNH. A helical membrane pass occupies residues 19-39; the sequence is GLLCASYPIPIILFTGLCILA. At 40–279 the chain is on the lumenal side; the sequence is CCYPLLKLPL…SLVHVHFKEE (240 aa). The loop-1 stretch occupies residues 46 to 284; that stretch reads KLPLPGTGPV…HFKEEIGIAE (239 aa). Positions 60 to 81 are disordered; it reads PVKDYSPPPSASDHKPGEPSEQ. N-linked (GlcNAc...) asparagine glycosylation occurs at Asn263. A helical membrane pass occupies residues 280–300; sequence IGIAELIPLVTTYIILFAYIY. One can recognise an SSD domain in the interval 284 to 442; that stretch reads ELIPLVTTYI…MPFFTTVLSI (159 aa). Topologically, residues 301–312 are cytoplasmic; that stretch reads FSTRKIDMVKSK. The helical transmembrane segment at 313-333 threads the bilayer; it reads WGLALAAVVTVLSSLLMSVGL. Topologically, residues 334-344 are lumenal; that stretch reads CTLFGLTPTLN. Residues 345–365 form a helical membrane-spanning segment; it reads GGEIFPYLVVVIGLENVLVLT. At 366 to 401 the chain is on the cytoplasmic side; sequence KSVVSTPVDLEVKLRIAQGLSSESWSIMKNMATELG. The helical transmembrane segment at 402-422 threads the bilayer; it reads IILIGYFTLVPAIQEFCLFAV. Residue Val423 is a topological domain, lumenal. The chain crosses the membrane as a helical span at residues 424-444; it reads GLVSDFFLQMPFFTTVLSIDI. Topologically, residues 445–518 are cytoplasmic; it reads RRMELADLNK…FLARTRLAQR (74 aa). An ER export signal motif is present at residues 447–452; the sequence is MELADL. Glycyl lysine isopeptide (Lys-Gly) (interchain with G-Cter in ubiquitin) cross-links involve residues Lys454 and Lys466. A helical membrane pass occupies residues 519 to 539; the sequence is LIMAGTVVWIGILAYTDPAGL. Residues 535-710 form a loop-7 region; the sequence is DPAGLRTYLA…QAHRDVTLYK (176 aa). Residues 540–707 lie on the Lumenal side of the membrane; that stretch reads RTYLAAQVTE…GVAQAHRDVT (168 aa). Residues 588 to 617 are disordered; the sequence is LENQTLPGEPPEPGGQAEGVHDSPAPEVTW. N-linked (GlcNAc...) asparagine glycans are attached at residues Asn590 and Asn641. The segment at 668 to 696 is disordered; sequence EGRHPQDSRSAWSPPQPAQGGLWDAGPKG. The helical transmembrane segment at 708–728 threads the bilayer; it reads LYKVAALGLATGILLVLLLCL. At 729–1279 the chain is on the cytoplasmic side; the sequence is YRVLCPRNYG…YVPSVLEKLD (551 aa). Residues 730-1279 are interaction with SREBF2; the sequence is RVLCPRNYGQ…YVPSVLEKLD (550 aa). One copy of the WD 1 repeat lies at 770–810; that stretch reads VLRGHLMDIECLASDGMLLVSCCLAGHVCVWDAQTGDCLTR. Residues Ser821, Ser837, Ser843, and Ser850 each carry the phosphoserine modification. Disordered regions lie at residues 834 to 868, 883 to 903, and 925 to 959; these read ERLSDGGKASPEEPGDSPPLRHRPRGTPLPSLFGD, HPRLPELDHPEPRHRSGCRRT, and VPMHTPAPRPPSPGPTPPQTPEDEGSFPPEKGSPS. The segment covering 885-896 has biased composition (basic and acidic residues); it reads RLPELDHPEPRH. A compositionally biased stretch (pro residues) spans 929-944; it reads TPAPRPPSPGPTPPQT. Ser936 is modified (phosphoserine). WD repeat units lie at residues 952 to 1002 and 1005 to 1042; these read PPEK…LRCS and EVASGITALVFLDKRIVAARLNGSLDFFSLETHTALSP. Position 1051 is an omega-N-methylarginine (Arg1051). WD repeat units lie at residues 1077 to 1114, 1117 to 1155, 1158 to 1195, and 1197 to 1235; these read AHQKPITALKAAAGRLVTGSQDHTLRVFRLEDSCCLFT, GHSGAITTVYIDQTMVLASGGQDGAICLWDVLTGSRVSH, AHRGDVTSLTCTTSCVISSGLDDLISIWDRSTGIKLYS, and QQDLGCGASLGVISDNLLVTGGQGCVSFWDLNYGDLLQT.

Belongs to the WD repeat SCAP family. As to quaternary structure, membrane region forms a homotetramer. Component of the SCAP-SREBP complex (composed of SCAP and SREBF1/SREBP1 or SREBF2/SREBP2); interacts with SREBF1/SREBP1 or SREBF2/SREBP2 through its C-terminal cytoplasmic domain. Forms a ternary complex with INSIG1 or INSIG2 through its transmembrane domains at high sterol concentrations. Interacts with PAQR3; the interaction anchors the SCAP-SREBP complex to the Golgi apparatus in low cholesterol conditions. Interacts with the SEC23-SEC24 complex in a SAR1-GTP-dependent manner through an ER export signal in its third cytoplasmic loop. Interacts with RNF139; the interaction inhibits the interaction of SCAP with SEC24B and hampering the ER to Golgi transport of the SCAP-SREBP complex. Interacts with SPRING1. Ubiquitinated at Lys-454 and Lys-466. RNF145 triggers ubiquitination of SCAP, likely inhibiting SCAP-SREBP complex transport to the Golgi apparatus and the subsequent processing/maturation of SREBF2/SREBP2. As to expression, widely expressed with higher levels in lung, kidney, gut, brain and adipose tissue. Expressed in liver and muscle. Isoform 3 expressed in testis. In terms of tissue distribution, expressed in testis.

It localises to the endoplasmic reticulum membrane. Its subcellular location is the golgi apparatus membrane. The protein localises to the cytoplasmic vesicle. It is found in the COPII-coated vesicle membrane. Escort protein required for cholesterol as well as lipid homeostasis. Regulates export of the SCAP-SREBP complex from the endoplasmic reticulum to the Golgi upon low cholesterol, thereby regulating the processing of sterol regulatory element-binding proteins (SREBPs) SREBF1/SREBP1 and SREBF2/SREBP2. At high sterol concentrations, formation of a ternary complex with INSIG (INSIG1 or INSIG2) leads to mask the ER export signal in SCAP, promoting retention of the complex in the endoplasmic reticulum. Low sterol concentrations trigger release of INSIG, a conformational change in the SSD domain of SCAP, unmasking of the ER export signal, promoting recruitment into COPII-coated vesicles and transport of the SCAP-SREBP to the Golgi: in the Golgi, SREBPs are then processed, releasing the transcription factor fragment of SREBPs from the membrane, its import into the nucleus and up-regulation of LDLR, INSIG1 and the mevalonate pathway. Binds cholesterol via its SSD domain. In Sus scrofa (Pig), this protein is Sterol regulatory element-binding protein cleavage-activating protein.